A 462-amino-acid polypeptide reads, in one-letter code: Cysteine--tRNA ligase (462 aa).

Position 29 (cysteine 29) interacts with Zn(2+). Positions 31–41 (PTVYDHAHIGN) match the 'HIGH' region motif. 3 residues coordinate Zn(2+): cysteine 214, histidine 239, and glutamate 243. Positions 272–276 (KMSKS) match the 'KMSKS' region motif. Lysine 275 is an ATP binding site.

The protein belongs to the class-I aminoacyl-tRNA synthetase family. As to quaternary structure, monomer. Zn(2+) is required as a cofactor.

Its subcellular location is the cytoplasm. It carries out the reaction tRNA(Cys) + L-cysteine + ATP = L-cysteinyl-tRNA(Cys) + AMP + diphosphate. The sequence is that of Cysteine--tRNA ligase from Azorhizobium caulinodans (strain ATCC 43989 / DSM 5975 / JCM 20966 / LMG 6465 / NBRC 14845 / NCIMB 13405 / ORS 571).